The primary structure comprises 207 residues: MPKVQVVNMQGSPVGELELDEYVFGIEPNTHVMHQAVVGQLASQRRGTHSTLLRGEVRGGGRKPWRQKGTGRARAGSIRSPLWRGGAVLFGPKPRKYGFSLPKKVRRLALRSALSSKVNEQKLIVLEDLSLNEAKTREMVKVLQALNVSKKALIVTDEFMETIERSARNIAGIKTTAVEGMNIYDLLNSDVIVMTKAAVTKTEEVLA.

The segment at 56-76 is disordered; the sequence is EVRGGGRKPWRQKGTGRARAG. A compositionally biased stretch (basic residues) spans 60–71; sequence GGRKPWRQKGTG.

The protein belongs to the universal ribosomal protein uL4 family. In terms of assembly, part of the 50S ribosomal subunit.

Its function is as follows. One of the primary rRNA binding proteins, this protein initially binds near the 5'-end of the 23S rRNA. It is important during the early stages of 50S assembly. It makes multiple contacts with different domains of the 23S rRNA in the assembled 50S subunit and ribosome. In terms of biological role, forms part of the polypeptide exit tunnel. The polypeptide is Large ribosomal subunit protein uL4 (Desulfitobacterium hafniense (strain Y51)).